The primary structure comprises 249 residues: Glutathione S-transferase S1 (249 aa).

The segment covering M1–P38 has biased composition (low complexity). A disordered region spans residues M1–P42. The GST N-terminal domain occupies H48–G125. Glutathione is bound by residues Y54, W85, K89, Q96–M97, and Q109–S110. The 123-residue stretch at T127–V249 folds into the GST C-terminal domain.

This sequence belongs to the GST superfamily. Sigma family. As to quaternary structure, homodimer.

The enzyme catalyses RX + glutathione = an S-substituted glutathione + a halide anion + H(+). Its function is as follows. Conjugation of reduced glutathione to a wide number of exogenous and endogenous hydrophobic electrophiles. May be involved in the detoxification of metabolites produced during cellular division and morphogenesis. This Drosophila melanogaster (Fruit fly) protein is Glutathione S-transferase S1.